Reading from the N-terminus, the 91-residue chain is Small ribosomal subunit protein bS16c (91 aa).

It belongs to the bacterial ribosomal protein bS16 family.

It is found in the plastid. The protein resides in the chloroplast. This Pelargonium hortorum (Common geranium) protein is Small ribosomal subunit protein bS16c.